Reading from the N-terminus, the 355-residue chain is UDP-N-acetylglucosamine--N-acetylmuramyl-(pentapeptide) pyrophosphoryl-undecaprenol N-acetylglucosamine transferase (355 aa).

UDP-N-acetyl-alpha-D-glucosamine-binding positions include 15-17 (TGG), Asn-127, Arg-163, Ser-191, Ile-244, 263-268 (ALTVSE), and Gln-288.

It belongs to the glycosyltransferase 28 family. MurG subfamily.

The protein resides in the cell inner membrane. It carries out the reaction di-trans,octa-cis-undecaprenyl diphospho-N-acetyl-alpha-D-muramoyl-L-alanyl-D-glutamyl-meso-2,6-diaminopimeloyl-D-alanyl-D-alanine + UDP-N-acetyl-alpha-D-glucosamine = di-trans,octa-cis-undecaprenyl diphospho-[N-acetyl-alpha-D-glucosaminyl-(1-&gt;4)]-N-acetyl-alpha-D-muramoyl-L-alanyl-D-glutamyl-meso-2,6-diaminopimeloyl-D-alanyl-D-alanine + UDP + H(+). Its pathway is cell wall biogenesis; peptidoglycan biosynthesis. Functionally, cell wall formation. Catalyzes the transfer of a GlcNAc subunit on undecaprenyl-pyrophosphoryl-MurNAc-pentapeptide (lipid intermediate I) to form undecaprenyl-pyrophosphoryl-MurNAc-(pentapeptide)GlcNAc (lipid intermediate II). This chain is UDP-N-acetylglucosamine--N-acetylmuramyl-(pentapeptide) pyrophosphoryl-undecaprenol N-acetylglucosamine transferase, found in Shigella flexneri serotype 5b (strain 8401).